The primary structure comprises 194 residues: N-acetyltransferase (194 aa).

Residues 9 to 173 (PQVRPGIAED…GRYWDVRWYE (165 aa)) form the N-acetyltransferase domain.

It belongs to the acetyltransferase family. PAT/BAR subfamily.

This Streptomyces griseus protein is N-acetyltransferase (nat).